An 84-amino-acid polypeptide reads, in one-letter code: Small ribosomal subunit protein bS18 (84 aa).

Belongs to the bacterial ribosomal protein bS18 family. As to quaternary structure, part of the 30S ribosomal subunit. Forms a tight heterodimer with protein bS6.

Functionally, binds as a heterodimer with protein bS6 to the central domain of the 16S rRNA, where it helps stabilize the platform of the 30S subunit. In Helicobacter hepaticus (strain ATCC 51449 / 3B1), this protein is Small ribosomal subunit protein bS18.